Here is a 270-residue protein sequence, read N- to C-terminus: Eukaryotic translation initiation factor 2 subunit beta (270 aa).

Positions 1–38 (MADEEQMERKEEATEIAPFDPTKKKKKKKVVIQDPADE) are disordered.

Belongs to the eIF-2-beta/eIF-5 family. Eukaryotic translation initiation factor 2 eIF2 is a heterotrimeric complex composed of an alpha, a beta and a gamma subunit.

The protein localises to the cytoplasm. It is found in the cytosol. Component of the eIF2 complex that functions in the early steps of protein synthesis by forming a ternary complex with GTP and initiator tRNA. This complex binds to a 40S ribosomal subunit, followed by mRNA binding to form a 43S pre-initiation complex (43S PIC). Junction of the 60S ribosomal subunit to form the 80S initiation complex is preceded by hydrolysis of the GTP bound to eIF2 and release of an eIF2-GDP binary complex. In order for eIF2 to recycle and catalyze another round of initiation, the GDP bound to eIF2 must exchange with GTP by way of a reaction catalyzed by eIF2B. The protein is Eukaryotic translation initiation factor 2 subunit beta of Triticum aestivum (Wheat).